A 206-amino-acid polypeptide reads, in one-letter code: Na(+)-translocating NADH-quinone reductase subunit E (206 aa).

Transmembrane regions (helical) follow at residues 12–32 (AVFV…FIAI), 36–56 (IQTA…TVPV), 85–105 (FLGL…LEMT), 118–138 (GIFL…LFMV), 148–168 (VVYG…LAGI), and 184–204 (LGIT…FSGV).

The protein belongs to the NqrDE/RnfAE family. In terms of assembly, composed of six subunits; NqrA, NqrB, NqrC, NqrD, NqrE and NqrF.

The protein localises to the cell inner membrane. It carries out the reaction a ubiquinone + n Na(+)(in) + NADH + H(+) = a ubiquinol + n Na(+)(out) + NAD(+). NQR complex catalyzes the reduction of ubiquinone-1 to ubiquinol by two successive reactions, coupled with the transport of Na(+) ions from the cytoplasm to the periplasm. NqrA to NqrE are probably involved in the second step, the conversion of ubisemiquinone to ubiquinol. The sequence is that of Na(+)-translocating NADH-quinone reductase subunit E from Alcanivorax borkumensis (strain ATCC 700651 / DSM 11573 / NCIMB 13689 / SK2).